The sequence spans 103 residues: UPF0145 protein BCE_1095 (103 aa).

Belongs to the UPF0145 family.

The protein is UPF0145 protein BCE_1095 of Bacillus cereus (strain ATCC 10987 / NRS 248).